A 372-amino-acid chain; its full sequence is Pyruvylated Gal-beta-1,3-epitope synthesis protein 5 (372 aa).

Residues 1 to 12 (MGLPLRIFAGNG) lie on the Cytoplasmic side of the membrane. A helical; Signal-anchor for type II membrane protein membrane pass occupies residues 13–35 (IGGWCLRLFLFGSLILLLRPLIF). Residues 36-372 (YSNTTMKKLK…LRIIEQWKQL (337 aa)) are Lumenal-facing. N-linked (GlcNAc...) asparagine glycans are attached at residues Asn38 and Asn128.

It is found in the golgi apparatus membrane. Its function is as follows. Involved in cell wall biogenesis. Has a role in the addition of Gal-beta1,3 moeities to galactomannans and their subsequent pyruvylation. Has a role in meiosis. The sequence is that of Pyruvylated Gal-beta-1,3-epitope synthesis protein 5 (pvg5) from Schizosaccharomyces pombe (strain 972 / ATCC 24843) (Fission yeast).